A 119-amino-acid polypeptide reads, in one-letter code: Promotilin (119 aa).

The signal sequence occupies residues 1 to 25; sequence MVSRKAVVVLLVVHAAAMLASHTEA. The disordered stretch occupies residues 40–72; that stretch reads EKERNKGQKKSLSVQQASEELGPLDPSEPTKEE.

This sequence belongs to the motilin family.

Its subcellular location is the secreted. Plays an important role in the regulation of interdigestive gastrointestinal motility and indirectly causes rhythmic contraction of duodenal and colonic smooth muscle. The sequence is that of Promotilin (MLN) from Sus scrofa (Pig).